Here is a 95-residue protein sequence, read N- to C-terminus: Small ribosomal subunit protein bS21 (95 aa).

Residues Arg-55–Arg-95 form a disordered region. Over residues Ala-78–Ala-89 the composition is skewed to gly residues.

This sequence belongs to the bacterial ribosomal protein bS21 family.

This is Small ribosomal subunit protein bS21 from Nitrobacter hamburgensis (strain DSM 10229 / NCIMB 13809 / X14).